Reading from the N-terminus, the 421-residue chain is Bestrophin homolog 2 (421 aa).

4 helical membrane-spanning segments follow: residues 28–48 (IWKA…IISV), 73–93 (LSFI…VDRW), 239–259 (LMYP…SIIA), and 275–295 (VYFP…LKVI).

Belongs to the anion channel-forming bestrophin (TC 1.A.46) family. Calcium-sensitive chloride channel subfamily. Forms oligomers.

The protein resides in the cell membrane. Forms chloride channels. This chain is Bestrophin homolog 2 (best-2), found in Caenorhabditis elegans.